A 196-amino-acid chain; its full sequence is Sesquiterpene phosphatase astK (196 aa).

This sequence belongs to the HAD-like hydrolase superfamily.

It catalyses the reaction (S,S)-drim-8-en-11-yl phosphate + H2O = (S,S)-drim-8-en-11-ol + phosphate. It participates in secondary metabolite biosynthesis; terpenoid biosynthesis. Its function is as follows. Sesquiterpene phosphatase; part of the gene cluster that mediates the biosynthesis of astellolides, drimane-type sesquiterpene esters that show antimicrobial, anti-inflammatory, and anti-tumor activities. The first step in astellolide biosynthesis is performed by the sesquiterpene cyclase astC that catalyzes the formation of drimanyl pyrophosphate from farnesyl pyrophosphate. Drimanyl pyrophosphate is then dephosphorylated by the sesquiterpene phosphatase astI to produce drimanyl monophosphate which is further dephosphorylated to drim-8-ene-11-ol by atsK. Drim-8-ene-11-ol is converted to confertifolin, probably by the cytochrome P450 monooxygenase astD and/or the dehydrogenase astE. The cytochrome P450 monooxygenases astB, astF and astJ then hydroxylate confertifolin at C6, C14, or C15 to form trihydroxy confertifolin. The nonribosomal peptide synthetase astA catalyzes ester bond formation between trihydroxy contifolin and benzoic acid (BA) or 4-hydroxy benzoic acid (4HBA), leading to the formation of dideacetyl astellolides A and B, respectively. Finally, the O-acetyltransferase astG converts dideacetyl astellolides A and B into deacetyl astellolides A and B. The protein is Sesquiterpene phosphatase astK of Aspergillus oryzae (strain ATCC 42149 / RIB 40) (Yellow koji mold).